A 688-amino-acid polypeptide reads, in one-letter code: MRAAEERKGVVPAARRRDQFPVGMRVLAVDDDPVCLKVLETLLLRCQYHVTTTNQAAIALKMLRENRDMFDLVISDVHMPDMDGFKLLELVGLEMDLPVIMLSVNGETKTVLKGITHGACDYLLKPVRIEELRNIWQHVIRRKFSTRDRANLDFYEECNKPPNADSDHVHGHVTCGSPDQSGRPSKKRKEYCSEEEDEGEVNTQDIDDPSAPKKPRVVWSVELHRKFVAAVNQLGIDKAVPKRILELMNVEKLTRENVASHLQKYRLYLKRLSAVASQQVSIVAALGGRDPFLHMGGFEGLQGYQAFTSSAALSSFTPHGLLNSPRNNPAALGTQGVPASKSIQTMSGSHTLSHSINDANKYHLSLPGNQKGNLGQGLATSLGQTQMQQKWIHEETDDLSTILSGNGLSNGMSGTLQSVTSSPLLPQELAECTQAKIVSQPSIRTSSVSSEHIEGAVGVSSGLLESRVSQQSTIPLSGFSANGLLIHGSFNNTCANKLGGTSSSCAPARSSNDLMVARDTKGGASSFGGAMLLPPDTEQKYLNFGGGNGLKQKFDDRTADSLFDLKFVWSSVPSSQLASNIGAHHAMSQRWNNSSSNSSNIGARMIGQATSSGSTVIPQMKTDFLVSGDMAMPKNASDLSIPKLQSELSSSSCSFDGLLNSIVKVEKDDVTFSDDLGCGDFYSLGACI.

Residues 25 to 140 (RVLAVDDDPV…ELRNIWQHVI (116 aa)) form the Response regulatory domain. Asp76 carries the post-translational modification 4-aspartylphosphate. Residues 161–212 (PPNADSDHVHGHVTCGSPDQSGRPSKKRKEYCSEEEDEGEVNTQDIDDPSAP) form a disordered region. A compositionally biased stretch (acidic residues) spans 193–208 (SEEEDEGEVNTQDIDD). Positions 211-270 (APKKPRVVWSVELHRKFVAAVNQLGIDKAVPKRILELMNVEKLTRENVASHLQKYRLYLK) form a DNA-binding region, myb-like GARP.

The protein belongs to the ARR family. Type-B subfamily. Two-component system major event consists of a His-to-Asp phosphorelay between a sensor histidine kinase (HK) and a response regulator (RR). In plants, the His-to-Asp phosphorelay involves an additional intermediate named Histidine-containing phosphotransfer protein (HPt). This multistep phosphorelay consists of a His-Asp-His-Asp sequential transfer of a phosphate group between first a His and an Asp of the HK protein, followed by the transfer to a conserved His of the HPt protein and finally the transfer to an Asp in the receiver domain of the RR protein.

Its subcellular location is the nucleus. Its function is as follows. Transcriptional activator that binds specific DNA sequence. Functions as a response regulator involved in His-to-Asp phosphorelay signal transduction system. Phosphorylation of the Asp residue in the receiver domain activates the ability of the protein to promote the transcription of target genes. May directly activate some type-A response regulators in response to cytokinins. This Oryza sativa subsp. japonica (Rice) protein is Two-component response regulator ORR23.